Consider the following 393-residue polypeptide: Chorismate synthase (393 aa).

NADP(+) contacts are provided by Arg-40 and Arg-46. Residues 129-131, 249-250, Gly-301, 316-320, and Arg-342 contribute to the FMN site; these read RSS, QA, and KPIPT.

It belongs to the chorismate synthase family. As to quaternary structure, homotetramer. FMNH2 serves as cofactor.

The enzyme catalyses 5-O-(1-carboxyvinyl)-3-phosphoshikimate = chorismate + phosphate. It participates in metabolic intermediate biosynthesis; chorismate biosynthesis; chorismate from D-erythrose 4-phosphate and phosphoenolpyruvate: step 7/7. Its function is as follows. Catalyzes the anti-1,4-elimination of the C-3 phosphate and the C-6 proR hydrogen from 5-enolpyruvylshikimate-3-phosphate (EPSP) to yield chorismate, which is the branch point compound that serves as the starting substrate for the three terminal pathways of aromatic amino acid biosynthesis. This reaction introduces a second double bond into the aromatic ring system. This Geotalea daltonii (strain DSM 22248 / JCM 15807 / FRC-32) (Geobacter daltonii) protein is Chorismate synthase.